The primary structure comprises 478 residues: MNLSIQGELQLFAEELHQHLTPSFLENLARELTFVKRKRKFSGHDLAIICVWVSQRVASDSLVRLCSQLHAVTGTLMSPEGLNKRFNKKAVCFLKHIFSTLLKNKICETSLIPSSSITYFQRIRILDATIFQVPKHLANVYPGSGGCAQTAGIKIQLEYDLHSGQFLNFQVEPGKNNDKTFGTECLATLRPGDLCIRDLGYYSLDDLDQMDQRGVYYISRLKLNNMVYIKNEFPEYFRNGIVKKQSQYIKVDLEHIMNTLKPGQVHEITEAYIGKDKKLFTRVIIYRLTEKQLRERKKKQVYTESKKGITYSEKSKRLAGMNIYVTNTPLEWVPMEQIHDFYSLRWQIEIIFKTWKSLFQIHDWQNIKRERLECHIYGKLIAIFLCSSTMFKMRQLILQKKKRELSEYKAIGMIQDHLYILYQAIQQNTQEITRILIRLFHLLQKNGRKSHRYEKKTVFDILGVVYEYTGLIKQKKIA.

It belongs to the transposase 11 family.

Its function is as follows. Involved in the transposition of the insertion sequence. This is Transposase for insertion sequence element IS231E from Bacillus thuringiensis subsp. finitimus.